Consider the following 481-residue polypeptide: Aspartyl/glutamyl-tRNA(Asn/Gln) amidotransferase subunit B (481 aa).

It belongs to the GatB/GatE family. GatB subfamily. As to quaternary structure, heterotrimer of A, B and C subunits.

It catalyses the reaction L-glutamyl-tRNA(Gln) + L-glutamine + ATP + H2O = L-glutaminyl-tRNA(Gln) + L-glutamate + ADP + phosphate + H(+). The enzyme catalyses L-aspartyl-tRNA(Asn) + L-glutamine + ATP + H2O = L-asparaginyl-tRNA(Asn) + L-glutamate + ADP + phosphate + 2 H(+). Functionally, allows the formation of correctly charged Asn-tRNA(Asn) or Gln-tRNA(Gln) through the transamidation of misacylated Asp-tRNA(Asn) or Glu-tRNA(Gln) in organisms which lack either or both of asparaginyl-tRNA or glutaminyl-tRNA synthetases. The reaction takes place in the presence of glutamine and ATP through an activated phospho-Asp-tRNA(Asn) or phospho-Glu-tRNA(Gln). This chain is Aspartyl/glutamyl-tRNA(Asn/Gln) amidotransferase subunit B, found in Ehrlichia chaffeensis (strain ATCC CRL-10679 / Arkansas).